The following is a 287-amino-acid chain: Bifunctional protein FolD (287 aa).

NADP(+) is bound by residues 165–167, T192, and V233; that span reads GRG.

Belongs to the tetrahydrofolate dehydrogenase/cyclohydrolase family. In terms of assembly, homodimer.

The catalysed reaction is (6R)-5,10-methylene-5,6,7,8-tetrahydrofolate + NADP(+) = (6R)-5,10-methenyltetrahydrofolate + NADPH. It catalyses the reaction (6R)-5,10-methenyltetrahydrofolate + H2O = (6R)-10-formyltetrahydrofolate + H(+). It functions in the pathway one-carbon metabolism; tetrahydrofolate interconversion. Functionally, catalyzes the oxidation of 5,10-methylenetetrahydrofolate to 5,10-methenyltetrahydrofolate and then the hydrolysis of 5,10-methenyltetrahydrofolate to 10-formyltetrahydrofolate. This is Bifunctional protein FolD from Cutibacterium acnes (strain DSM 16379 / KPA171202) (Propionibacterium acnes).